The sequence spans 514 residues: Putative thymidine phosphorylase (514 aa).

Belongs to the thymidine/pyrimidine-nucleoside phosphorylase family. Type 2 subfamily.

It catalyses the reaction thymidine + phosphate = 2-deoxy-alpha-D-ribose 1-phosphate + thymine. The chain is Putative thymidine phosphorylase from Sphingopyxis alaskensis (strain DSM 13593 / LMG 18877 / RB2256) (Sphingomonas alaskensis).